The sequence spans 281 residues: Large ribosomal subunit protein uL2 (281 aa).

Positions 222–281 are disordered; it reads TVRGSAMNPNDHPHGGGEGRQPIGRKSPMTPWGKRALGVKTRATKKASNQFIIRRRKETK.

This sequence belongs to the universal ribosomal protein uL2 family. Part of the 50S ribosomal subunit. Forms a bridge to the 30S subunit in the 70S ribosome.

One of the primary rRNA binding proteins. Required for association of the 30S and 50S subunits to form the 70S ribosome, for tRNA binding and peptide bond formation. It has been suggested to have peptidyltransferase activity; this is somewhat controversial. Makes several contacts with the 16S rRNA in the 70S ribosome. The chain is Large ribosomal subunit protein uL2 from Metamycoplasma hominis (strain ATCC 23114 / DSM 25592 / NBRC 14850 / NCTC 10111 / PG21) (Mycoplasma hominis).